The primary structure comprises 537 residues: RNA polymerase sigma-54 factor 2 (537 aa).

A disordered region spans residues 52–90 (ANDEASGGEAPAEAGQFSDSDGGHNDEPGGGPGEAFEPG). A compositionally biased stretch (low complexity) spans 55-66 (EASGGEAPAEAG). Positions 403-422 (NLKAVADAIQMHESTVSRVT) form a DNA-binding region, H-T-H motif. An RPON box motif is present at residues 492-500 (ARRTVAKYR). Residues 507 to 537 (SSVQRRRDKQSALGNVLSTAMSDRSRNPEPA) form a disordered region. Polar residues predominate over residues 518-528 (ALGNVLSTAMS).

Belongs to the sigma-54 factor family.

Functionally, sigma factors are initiation factors that promote the attachment of RNA polymerase to specific initiation sites and are then released. This sigma factor is responsible for the expression of the nitrogen fixation genes. In Bradyrhizobium diazoefficiens (strain JCM 10833 / BCRC 13528 / IAM 13628 / NBRC 14792 / USDA 110), this protein is RNA polymerase sigma-54 factor 2 (rpoN2).